A 142-amino-acid chain; its full sequence is Universal stress protein G (142 aa).

The protein belongs to the universal stress protein A family.

The polypeptide is Universal stress protein G (uspG) (Escherichia coli O157:H7).